Consider the following 151-residue polypeptide: tRNA-specific adenosine deaminase (151 aa).

The CMP/dCMP-type deaminase domain occupies 1-111 (MGKEYFLKVA…LDKKHGGVVS (111 aa)). His52 is a Zn(2+) binding site. The Proton donor role is filled by Glu54. Zn(2+) contacts are provided by Cys82 and Cys85.

Belongs to the cytidine and deoxycytidylate deaminase family. In terms of assembly, homodimer. The cofactor is Zn(2+).

It catalyses the reaction adenosine(34) in tRNA + H2O + H(+) = inosine(34) in tRNA + NH4(+). Functionally, catalyzes the deamination of adenosine to inosine at the wobble position 34 of tRNA(Arg2). This chain is tRNA-specific adenosine deaminase, found in Aquifex aeolicus (strain VF5).